The primary structure comprises 259 residues: MAAAAAAAAGDSDSWDADAFSVEDPVRKVGGGGTAGGDRWEGEDEDEDVKDNWDDDDDEKKEEAEVKPEVKISEKKKIAEKIKEKERQQKKRQEEIKKRLEEPEEPKVLTPEEQLADKLRLKKLQEESDLELAKETFGVNNTVYGIDAMNPSSRDDFTEFGKLLKDKITQYEKSLYYASFLEVLVRDVCISLEIDDLKKITNSLTVLCSEKQKQEKQSKAKKKKKGVVPGGGLKATMKDDLADYGGYDGGYVQDYEDFM.

A compositionally biased stretch (low complexity) spans 1-12 (MAAAAAAAAGDS). A sufficient for interaction with EIF3B region spans residues 1–70 (MAAAAAAAAG…KEEAEVKPEV (70 aa)). The segment at 1-111 (MAAAAAAAAG…EPEEPKVLTP (111 aa)) is disordered. Residues serine 12, serine 14, and serine 21 each carry the phosphoserine modification. Acidic residues predominate over residues 41 to 60 (EGEDEDEDVKDNWDDDDDEK). Positions 61–107 (KEEAEVKPEVKISEKKKIAEKIKEKERQQKKRQEEIKKRLEEPEEPK) are enriched in basic and acidic residues. The stretch at 71-136 (KISEKKKIAE…ESDLELAKET (66 aa)) forms a coiled coil. Lysine 107 participates in a covalent cross-link: Glycyl lysine isopeptide (Lys-Gly) (interchain with G-Cter in SUMO2). Position 110 is a phosphothreonine (threonine 110). Serine 128 carries the phosphoserine modification. Residues 218–247 (SKAKKKKKGVVPGGGLKATMKDDLADYGGY) form a disordered region. Positions 244–259 (YGGYDGGYVQDYEDFM) are promotes stable association with the 40S ribosome. Tyrosine 255 bears the Phosphotyrosine mark.

It belongs to the eIF-3 subunit J family. In terms of assembly, component of the eukaryotic translation initiation factor 3 (eIF-3) complex, which is composed of 13 subunits: EIF3A, EIF3B, EIF3C, EIF3D, EIF3E, EIF3F, EIF3G, EIF3H, EIF3I, EIF3J, EIF3K, EIF3L and EIF3M. The eIF-3 complex appears to include 3 stable modules: module A is composed of EIF3A, EIF3B, EIF3G and EIF3I; module B is composed of EIF3F, EIF3H, and EIF3M; and module C is composed of EIF3C, EIF3D, EIF3E, EIF3K and EIF3L. EIF3C of module C binds EIF3B of module A and EIF3H of module B, thereby linking the three modules. EIF3J is a labile subunit that binds to the eIF-3 complex via EIF3B. The eIF-3 complex interacts with RPS6KB1 under conditions of nutrient depletion. Mitogenic stimulation leads to binding and activation of a complex composed of MTOR and RPTOR, leading to phosphorylation and release of RPS6KB1 and binding of EIF4B to eIF-3. In terms of processing, phosphorylated. Phosphorylation is enhanced upon serum stimulation.

Its subcellular location is the cytoplasm. Functionally, component of the eukaryotic translation initiation factor 3 (eIF-3) complex, which is required for several steps in the initiation of protein synthesis. The eIF-3 complex associates with the 40S ribosome and facilitates the recruitment of eIF-1, eIF-1A, eIF-2:GTP:methionyl-tRNAi and eIF-5 to form the 43S pre-initiation complex (43S PIC). The eIF-3 complex stimulates mRNA recruitment to the 43S PIC and scanning of the mRNA for AUG recognition. The eIF-3 complex is also required for disassembly and recycling of post-termination ribosomal complexes and subsequently prevents premature joining of the 40S and 60S ribosomal subunits prior to initiation. The eIF-3 complex specifically targets and initiates translation of a subset of mRNAs involved in cell proliferation, including cell cycling, differentiation and apoptosis, and uses different modes of RNA stem-loop binding to exert either translational activation or repression. This subunit binds directly within the mRNA entry channel of the 40S ribosome to the aminoacyl (A) site. It may regulate the interaction between the 43S PIC and mRNA. This Pongo abelii (Sumatran orangutan) protein is Eukaryotic translation initiation factor 3 subunit J.